Here is a 262-residue protein sequence, read N- to C-terminus: Hydroxyethylthiazole kinase (262 aa).

Position 50 (methionine 50) interacts with substrate. Residues arginine 125 and threonine 171 each contribute to the ATP site. Glycine 198 contributes to the substrate binding site.

This sequence belongs to the Thz kinase family. Mg(2+) serves as cofactor.

It catalyses the reaction 5-(2-hydroxyethyl)-4-methylthiazole + ATP = 4-methyl-5-(2-phosphooxyethyl)-thiazole + ADP + H(+). The protein operates within cofactor biosynthesis; thiamine diphosphate biosynthesis; 4-methyl-5-(2-phosphoethyl)-thiazole from 5-(2-hydroxyethyl)-4-methylthiazole: step 1/1. Its function is as follows. Catalyzes the phosphorylation of the hydroxyl group of 4-methyl-5-beta-hydroxyethylthiazole (THZ). This is Hydroxyethylthiazole kinase from Escherichia coli O7:K1 (strain IAI39 / ExPEC).